The following is a 120-amino-acid chain: Small ribosomal subunit protein uS13 (120 aa).

The segment at 96–120 (PCRGQRTRTNARTRKGPRKAIAGKK) is disordered.

It belongs to the universal ribosomal protein uS13 family. As to quaternary structure, part of the 30S ribosomal subunit. Forms a loose heterodimer with protein S19. Forms two bridges to the 50S subunit in the 70S ribosome.

Functionally, located at the top of the head of the 30S subunit, it contacts several helices of the 16S rRNA. In the 70S ribosome it contacts the 23S rRNA (bridge B1a) and protein L5 of the 50S subunit (bridge B1b), connecting the 2 subunits; these bridges are implicated in subunit movement. Contacts the tRNAs in the A and P-sites. This is Small ribosomal subunit protein uS13 from Neisseria gonorrhoeae (strain ATCC 700825 / FA 1090).